The primary structure comprises 336 residues: Holliday junction branch migration complex subunit RuvB (336 aa).

The interval 4 to 185 (MDERLLSGES…FGVLSRLEYY (182 aa)) is large ATPase domain (RuvB-L). ATP is bound by residues Leu24, Arg25, Gly66, Lys69, Thr70, Thr71, 132–134 (EDF), Arg175, Tyr185, and Arg222. Thr70 serves as a coordination point for Mg(2+). The interval 186 to 256 (TVDQLSAIVE…ITQMALELLQ (71 aa)) is small ATPAse domain (RuvB-S). A head domain (RuvB-H) region spans residues 259–336 (KLGLDHIDHK…EHFGMEMPKV (78 aa)). Residues Arg314 and Arg319 each coordinate DNA.

This sequence belongs to the RuvB family. Homohexamer. Forms an RuvA(8)-RuvB(12)-Holliday junction (HJ) complex. HJ DNA is sandwiched between 2 RuvA tetramers; dsDNA enters through RuvA and exits via RuvB. An RuvB hexamer assembles on each DNA strand where it exits the tetramer. Each RuvB hexamer is contacted by two RuvA subunits (via domain III) on 2 adjacent RuvB subunits; this complex drives branch migration. In the full resolvosome a probable DNA-RuvA(4)-RuvB(12)-RuvC(2) complex forms which resolves the HJ.

It is found in the cytoplasm. The enzyme catalyses ATP + H2O = ADP + phosphate + H(+). Functionally, the RuvA-RuvB-RuvC complex processes Holliday junction (HJ) DNA during genetic recombination and DNA repair, while the RuvA-RuvB complex plays an important role in the rescue of blocked DNA replication forks via replication fork reversal (RFR). RuvA specifically binds to HJ cruciform DNA, conferring on it an open structure. The RuvB hexamer acts as an ATP-dependent pump, pulling dsDNA into and through the RuvAB complex. RuvB forms 2 homohexamers on either side of HJ DNA bound by 1 or 2 RuvA tetramers; 4 subunits per hexamer contact DNA at a time. Coordinated motions by a converter formed by DNA-disengaged RuvB subunits stimulates ATP hydrolysis and nucleotide exchange. Immobilization of the converter enables RuvB to convert the ATP-contained energy into a lever motion, pulling 2 nucleotides of DNA out of the RuvA tetramer per ATP hydrolyzed, thus driving DNA branch migration. The RuvB motors rotate together with the DNA substrate, which together with the progressing nucleotide cycle form the mechanistic basis for DNA recombination by continuous HJ branch migration. Branch migration allows RuvC to scan DNA until it finds its consensus sequence, where it cleaves and resolves cruciform DNA. The protein is Holliday junction branch migration complex subunit RuvB of Bacillus thuringiensis (strain Al Hakam).